The following is a 150-amino-acid chain: Ribonuclease H (150 aa).

Residues 1–142 form the RNase H type-1 domain; the sequence is MSDSVEIFTD…ADQLANRGVD (142 aa). Residues Asp-10, Glu-48, Asp-70, and Asp-134 each contribute to the Mg(2+) site.

Belongs to the RNase H family. Monomer. Requires Mg(2+) as cofactor.

Its subcellular location is the cytoplasm. It catalyses the reaction Endonucleolytic cleavage to 5'-phosphomonoester.. Functionally, endonuclease that specifically degrades the RNA of RNA-DNA hybrids. The chain is Ribonuclease H from Pseudomonas fluorescens (strain ATCC BAA-477 / NRRL B-23932 / Pf-5).